Consider the following 213-residue polypeptide: Protein-L-isoaspartate O-methyltransferase (213 aa).

S64 is an active-site residue.

Belongs to the methyltransferase superfamily. L-isoaspartyl/D-aspartyl protein methyltransferase family.

It is found in the cytoplasm. The enzyme catalyses [protein]-L-isoaspartate + S-adenosyl-L-methionine = [protein]-L-isoaspartate alpha-methyl ester + S-adenosyl-L-homocysteine. Catalyzes the methyl esterification of L-isoaspartyl residues in peptides and proteins that result from spontaneous decomposition of normal L-aspartyl and L-asparaginyl residues. It plays a role in the repair and/or degradation of damaged proteins. This Christiangramia forsetii (strain DSM 17595 / CGMCC 1.15422 / KT0803) (Gramella forsetii) protein is Protein-L-isoaspartate O-methyltransferase.